A 287-amino-acid chain; its full sequence is AA14 family lytic polysaccharide monooxygenase A (287 aa).

Residues 1-18 (MLRILTLSILATSKLASA) form the signal peptide. N-linked (GlcNAc...) asparagine glycans are attached at residues N33, N83, and N137. 3 cysteine pairs are disulfide-bonded: C188/C193, C195/C216, and C236/C243. N238 is a glycosylation site (N-linked (GlcNAc...) asparagine).

This sequence belongs to the polysaccharide monooxygenase AA14 family. It depends on Cu(2+) as a cofactor.

The protein resides in the secreted. In terms of biological role, lytic polysaccharide monooxygenase (LPMO) that has a broad substrate specificity with strong oxidative activity on pure amorphous cellulose and xyloglucan and plays as a bifunctional enzyme to decompose some specific network structures formed between cellulose and hemicellulose in the plant cell walls. Catalysis by LPMOs requires the reduction of the active-site copper from Cu(II) to Cu(I) by a reducing agent and H(2)O(2) or O(2) as a cosubstrate. Simultaneously oxidizes cellulose, xylan and xyloglucan in natural hemi/cellulosic substrate such as fibrillated eucalyptus pulp, and releases native and oxidized cello-oligosaccharides, xylo-oligosaccharides and xyloglucan oligosaccharides from this substrate. The cellulolytic/hemicellulolytic activity becomes weaker as the contents of xylan increase in the alkaline-extracted hemi/cellulosic substrates. This Talaromyces rugulosus (Penicillium rugulosum) protein is AA14 family lytic polysaccharide monooxygenase A.